Here is a 161-residue protein sequence, read N- to C-terminus: Ecotin (161 aa).

The first 23 residues, 1-23, serve as a signal peptide directing secretion; sequence MGNFTVRATAGLMLASLSTLAHA. Residues C69 and C106 are joined by a disulfide bond.

Belongs to the protease inhibitor I11 (ecotin) family. In terms of assembly, homodimer.

Its subcellular location is the periplasm. General inhibitor of family S1 serine proteases. This Pseudomonas fluorescens (strain Pf0-1) protein is Ecotin.